The chain runs to 331 residues: Phenylalanine--tRNA ligase alpha subunit (331 aa).

A Mg(2+)-binding site is contributed by Glu-256.

Belongs to the class-II aminoacyl-tRNA synthetase family. Phe-tRNA synthetase alpha subunit type 1 subfamily. Tetramer of two alpha and two beta subunits. Requires Mg(2+) as cofactor.

The protein localises to the cytoplasm. It carries out the reaction tRNA(Phe) + L-phenylalanine + ATP = L-phenylalanyl-tRNA(Phe) + AMP + diphosphate + H(+). The chain is Phenylalanine--tRNA ligase alpha subunit from Colwellia psychrerythraea (strain 34H / ATCC BAA-681) (Vibrio psychroerythus).